The primary structure comprises 59 residues: Potassium channel toxin alpha-KTx 3.10 (59 aa).

An N-terminal signal peptide occupies residues 1–22 (MKVFFAVLIALFVCSMVIGIHG). 3 cysteine pairs are disulfide-bonded: cysteine 30/cysteine 50, cysteine 36/cysteine 55, and cysteine 40/cysteine 57.

The protein belongs to the short scorpion toxin superfamily. Potassium channel inhibitor family. Alpha-KTx 03 subfamily. In terms of tissue distribution, expressed by the venom gland.

The protein resides in the secreted. Inhibits insect potassium channel. Is at least a 100-fold more potent against the Drosophila Shaker channel than towards its mammalian homologs Kv1.1/KCNA1 and Kv1.3/KCNA3. This Buthus israelis (Israeli scorpion) protein is Potassium channel toxin alpha-KTx 3.10.